Consider the following 258-residue polypeptide: Small ribosomal subunit protein uS15m (258 aa).

The transit peptide at 1–57 directs the protein to the mitochondrion; it reads MLRAAWRALSSVRAQAVTRAPVPALRGGSSASLLSARCGLQPPSLLRAARAYAAVQK. Residues 229–258 are disordered; that stretch reads KAAAAAAKKEKNEGVPENPSNAVPEKTQVN.

It belongs to the universal ribosomal protein uS15 family. As to quaternary structure, component of the mitochondrial ribosome small subunit (28S) which comprises a 12S rRNA and about 30 distinct proteins. Interacts with METTL17.

The protein resides in the mitochondrion matrix. This Mus musculus (Mouse) protein is Small ribosomal subunit protein uS15m (Mrps15).